The chain runs to 506 residues: Chromodomain Y-like protein 2 (506 aa).

In terms of domain architecture, Chromo spans 7 to 67 (YEVERIVDKR…LHMSKDKRIK (61 aa)). The interval 64–177 (KRIKSGKQSS…RHFGNGSHQP (114 aa)) is disordered. Residues 88–98 (KLSHRPSDPGK) are compositionally biased toward basic and acidic residues. The span at 101 to 120 (GTSHKRKRINPPLAKPKKGY) shows a compositional bias: basic residues. Residues 133-143 (KTVSYRTTPSG) show a composition bias toward polar residues.

In terms of assembly, interacts (via chromo domain) with histone H3K9me3. As to expression, ubiquitously expressed.

The protein localises to the nucleus. This is Chromodomain Y-like protein 2 (CDYL2) from Homo sapiens (Human).